Here is a 589-residue protein sequence, read N- to C-terminus: Intermediate filament protein B (589 aa).

The tract at residues 1-84 is head; that stretch reads SLKQSQESSE…LEATDKEKKE (84 aa). Positions 81 to 433 constitute an IF rod domain; that stretch reads EKKEMQGLND…KMLEGEESRV (353 aa). A coil 1A region spans residues 85–116; the sequence is MQGLNDRLGNYIDRVKKLEEQNRKLVADLDEL. Positions 117–130 are linker 1; sequence RGRWGKDTSEIKIQ. The coil 1B stretch occupies residues 131–268; the sequence is YSDSLRDARK…RVHEQEVKEL (138 aa). Residues 269 to 285 are linker 12; sequence QALLAQAPADTREFFKN. The interval 286 to 433 is coil 2; that stretch reads ELALAIRDIK…KMLEGEESRV (148 aa). Positions 434 to 589 are tail; that stretch reads GLRQMVEQVV…HTQKTIQTGQ (156 aa). The disordered stretch occupies residues 446–470; sequence HSLQQQEDTDSTRNVRGEVSTKTTF. The 119-residue stretch at 466-584 folds into the LTD domain; sequence TKTTFQRSAK…DERATHTQKT (119 aa).

It belongs to the intermediate filament family. As to quaternary structure, a and B can form homopolymers. Giant body muscle cells.

The protein localises to the cytoplasm. The protein is Intermediate filament protein B of Ascaris suum (Pig roundworm).